The chain runs to 234 residues: Lipoprotein-releasing system ATP-binding protein LolD (234 aa).

The 228-residue stretch at 7–234 (LLCNNLCKKY…QDELTVTGAL (228 aa)) folds into the ABC transporter domain. 43-50 (GSSGSGKS) lines the ATP pocket.

Belongs to the ABC transporter superfamily. Lipoprotein translocase (TC 3.A.1.125) family. The complex is composed of two ATP-binding proteins (LolD) and two transmembrane proteins (LolC and LolE).

The protein resides in the cell inner membrane. Functionally, part of the ABC transporter complex LolCDE involved in the translocation of mature outer membrane-directed lipoproteins, from the inner membrane to the periplasmic chaperone, LolA. Responsible for the formation of the LolA-lipoprotein complex in an ATP-dependent manner. This is Lipoprotein-releasing system ATP-binding protein LolD from Photorhabdus laumondii subsp. laumondii (strain DSM 15139 / CIP 105565 / TT01) (Photorhabdus luminescens subsp. laumondii).